The following is a 432-amino-acid chain: 5'-deoxyadenosine deaminase (432 aa).

2 residues coordinate Zn(2+): His63 and His65. Substrate is bound by residues Glu92 and His184. A Zn(2+)-binding site is contributed by His211. Substrate-binding residues include Glu214 and Asp299. Asp299 serves as a coordination point for Zn(2+).

This sequence belongs to the metallo-dependent hydrolases superfamily. MTA/SAH deaminase family. As to quaternary structure, homotetramer. It depends on Zn(2+) as a cofactor.

It carries out the reaction 5'-deoxyadenosine + H2O + H(+) = 5'-deoxyinosine + NH4(+). It catalyses the reaction S-adenosyl-L-homocysteine + H2O + H(+) = S-inosyl-L-homocysteine + NH4(+). The catalysed reaction is S-methyl-5'-thioadenosine + H2O + H(+) = S-methyl-5'-thioinosine + NH4(+). The enzyme catalyses adenosine + H2O + H(+) = inosine + NH4(+). Its pathway is amino-acid biosynthesis; S-adenosyl-L-methionine biosynthesis. Its function is as follows. Catalyzes the deamination of three SAM-derived enzymatic products, namely 5'-deoxyadenosine, S-adenosyl-L-homocysteine, and 5'-methylthioadenosine, to produce the inosine analogs. Can also deaminate adenosine. The preferred substrate for this enzyme is 5'-deoxyadenosine, but all these substrates are efficiently deaminated. Likely functions in a S-adenosyl-L-methionine (SAM) recycling pathway from S-adenosyl-L-homocysteine (SAH) produced from SAM-dependent methylation reactions. May also be involved in the recycling of 5'-deoxyadenosine, whereupon the 5'-deoxyribose moiety of 5'-deoxyinosine is further metabolized to deoxyhexoses used for the biosynthesis of aromatic amino acids in methanogens. The protein is 5'-deoxyadenosine deaminase of Methanosarcina barkeri (strain Fusaro / DSM 804).